A 291-amino-acid polypeptide reads, in one-letter code: Lipoyl synthase (291 aa).

[4Fe-4S] cluster contacts are provided by Cys-43, Cys-48, Cys-54, Cys-69, Cys-73, Cys-76, and Ser-280. The 215-residue stretch at 55–269 folds into the Radical SAM core domain; it reads FSSRTATFLI…AAYGRARGIP (215 aa).

This sequence belongs to the radical SAM superfamily. Lipoyl synthase family. [4Fe-4S] cluster serves as cofactor.

It is found in the cytoplasm. It catalyses the reaction [[Fe-S] cluster scaffold protein carrying a second [4Fe-4S](2+) cluster] + N(6)-octanoyl-L-lysyl-[protein] + 2 oxidized [2Fe-2S]-[ferredoxin] + 2 S-adenosyl-L-methionine + 4 H(+) = [[Fe-S] cluster scaffold protein] + N(6)-[(R)-dihydrolipoyl]-L-lysyl-[protein] + 4 Fe(3+) + 2 hydrogen sulfide + 2 5'-deoxyadenosine + 2 L-methionine + 2 reduced [2Fe-2S]-[ferredoxin]. Its pathway is protein modification; protein lipoylation via endogenous pathway; protein N(6)-(lipoyl)lysine from octanoyl-[acyl-carrier-protein]: step 2/2. Its function is as follows. Catalyzes the radical-mediated insertion of two sulfur atoms into the C-6 and C-8 positions of the octanoyl moiety bound to the lipoyl domains of lipoate-dependent enzymes, thereby converting the octanoylated domains into lipoylated derivatives. The chain is Lipoyl synthase from Oleidesulfovibrio alaskensis (strain ATCC BAA-1058 / DSM 17464 / G20) (Desulfovibrio alaskensis).